Consider the following 460-residue polypeptide: Argininosuccinate lyase (460 aa).

The protein belongs to the lyase 1 family. Argininosuccinate lyase subfamily.

It is found in the cytoplasm. The enzyme catalyses 2-(N(omega)-L-arginino)succinate = fumarate + L-arginine. Its pathway is amino-acid biosynthesis; L-arginine biosynthesis; L-arginine from L-ornithine and carbamoyl phosphate: step 3/3. The polypeptide is Argininosuccinate lyase (Leuconostoc mesenteroides subsp. mesenteroides (strain ATCC 8293 / DSM 20343 / BCRC 11652 / CCM 1803 / JCM 6124 / NCDO 523 / NBRC 100496 / NCIMB 8023 / NCTC 12954 / NRRL B-1118 / 37Y)).